The following is a 461-amino-acid chain: Trigger factor (461 aa).

A PPIase FKBP-type domain is found at 169 to 256 (GDTAVIDFAG…LKDLKIKELP (88 aa)). A disordered region spans residues 432–461 (PGEAIEPGSGEDAPPEVAAGATEPEAQPNS).

The protein belongs to the FKBP-type PPIase family. Tig subfamily.

Its subcellular location is the cytoplasm. It catalyses the reaction [protein]-peptidylproline (omega=180) = [protein]-peptidylproline (omega=0). In terms of biological role, involved in protein export. Acts as a chaperone by maintaining the newly synthesized protein in an open conformation. Functions as a peptidyl-prolyl cis-trans isomerase. The polypeptide is Trigger factor (Gloeobacter violaceus (strain ATCC 29082 / PCC 7421)).